The chain runs to 104 residues: UPF0145 protein DET1617 (104 aa).

This sequence belongs to the UPF0145 family.

This Dehalococcoides mccartyi (strain ATCC BAA-2266 / KCTC 15142 / 195) (Dehalococcoides ethenogenes (strain 195)) protein is UPF0145 protein DET1617.